The primary structure comprises 221 residues: 7-carboxy-7-deazaguanine synthase (221 aa).

Substrate-binding positions include 12–14 and arginine 27; that span reads ING. Positions 18–216 constitute a Radical SAM core domain; sequence KSGQLSVFIR…IQIHKIIWNP (199 aa). Positions 31, 35, and 38 each coordinate [4Fe-4S] cluster. A Mg(2+)-binding site is contributed by threonine 40. Residue threonine 73 coordinates substrate. Glycine 75 is an S-adenosyl-L-methionine binding site.

It belongs to the radical SAM superfamily. 7-carboxy-7-deazaguanine synthase family. As to quaternary structure, homodimer. [4Fe-4S] cluster serves as cofactor. Requires S-adenosyl-L-methionine as cofactor. The cofactor is Mg(2+).

It carries out the reaction 6-carboxy-5,6,7,8-tetrahydropterin + H(+) = 7-carboxy-7-deazaguanine + NH4(+). The protein operates within purine metabolism; 7-cyano-7-deazaguanine biosynthesis. Functionally, catalyzes the complex heterocyclic radical-mediated conversion of 6-carboxy-5,6,7,8-tetrahydropterin (CPH4) to 7-carboxy-7-deazaguanine (CDG), a step common to the biosynthetic pathways of all 7-deazapurine-containing compounds. This Clostridium acetobutylicum (strain ATCC 824 / DSM 792 / JCM 1419 / IAM 19013 / LMG 5710 / NBRC 13948 / NRRL B-527 / VKM B-1787 / 2291 / W) protein is 7-carboxy-7-deazaguanine synthase.